We begin with the raw amino-acid sequence, 284 residues long: Tropomyosin (284 aa).

Residues 1–284 (MDAIKKKMLA…DSTFAELAGY (284 aa)) are a coiled coil. The interval 105–131 (RLQSATEKLEEASKAADESERGRKVLE) is disordered.

This sequence belongs to the tropomyosin family. As to quaternary structure, homodimer.

Tropomyosin, in association with the troponin complex, plays a central role in the calcium dependent regulation of muscle contraction. In Cornu aspersum (Brown garden snail), this protein is Tropomyosin.